The following is a 110-amino-acid chain: Late cornified envelope-like proline-rich protein 1 (110 aa).

Residues 1-24 (MSSDDKNKPGEPKNEPKQCDPGCE) are disordered.

It belongs to the cornifin (SPRR) family.

The sequence is that of Late cornified envelope-like proline-rich protein 1 (LELP1) from Bos taurus (Bovine).